An 87-amino-acid polypeptide reads, in one-letter code: Sodium channel neurotoxin MeuNaTxalpha-5* (87 aa).

Positions 1-19 are cleaved as a signal peptide; the sequence is MNYLILISFALLVITGVES. Residues 21–85 enclose the LCN-type CS-alpha/beta domain; the sequence is RDAYIAKPHN…VPIRIPGKCH (65 aa). Disulfide bonds link Cys-31-Cys-84, Cys-35-Cys-57, Cys-43-Cys-67, and Cys-47-Cys-69. Positions 86–87 are cleaved as a propeptide — removed by a carboxypeptidase; that stretch reads RR.

It belongs to the long (4 C-C) scorpion toxin superfamily. Sodium channel inhibitor family. Alpha subfamily. As to expression, expressed by the venom gland.

The protein resides in the secreted. Functionally, alpha toxins bind voltage-independently at site-3 of sodium channels (Nav) and inhibit the inactivation of the activated channels, thereby blocking neuronal transmission. This toxin inhibits inactivation of Nav1.6/SCN8A (EC(50)=790 nM) and drosophila DmNav1 (EC(50)=280 nM). The toxin (1 uM) does not significantly shift the midpoint of activation at the two channels, but induces a significant depolarizing shift in the V(1/2) of inactivation of the channels. Has antimicrobial activity. The chain is Sodium channel neurotoxin MeuNaTxalpha-5* from Mesobuthus eupeus (Lesser Asian scorpion).